An 827-amino-acid polypeptide reads, in one-letter code: Villin-1 (827 aa).

Residues 1–126 are necessary for homodimerization; that stretch reads MTKLSAQVKG…IRKGGVASGM (126 aa). The tract at residues 1–734 is core; sequence MTKLSAQVKG…YEDLKAELGN (734 aa). The Gelsolin-like 1 repeat unit spans residues 27 to 76; that stretch reads MQMVPVPSNSFGSFFDGDCYVIQAIHKTGSNLSYDIHYWIGQASSQDEQG. LPA/PIP2-binding site regions lie at residues 112 to 119 and 138 to 146; these read KKGIVIRK and RLLHVKGKR. Gelsolin-like repeat units follow at residues 148–188 and 265–309; these read VVAG…MERL and VVVR…QEKK. S366 bears the Phosphoserine mark. 3 Gelsolin-like repeats span residues 407 to 457, 528 to 568, and 631 to 672; these read NLEL…DEIT, TKAF…DERE, and FLAT…DEKK. Position 735 is a phosphoserine (S735). The headpiece stretch occupies residues 735-827; sequence SGDWSQITAE…QNLKKEKGLF (93 aa). The 67-residue stretch at 761–827 folds into the HP domain; it reads SGPLPIFPLE…QNLKKEKGLF (67 aa). Residues 816 to 824 form an LPA/PIP2-binding site 3 region; sequence KQQNLKKEK.

This sequence belongs to the villin/gelsolin family. As to quaternary structure, monomer. Homodimer; homodimerization is necessary for actin-bundling. Associates with F-actin; phosphorylation at tyrosine residues decreases the association with F-actin. Interacts (phosphorylated at C-terminus tyrosine phosphorylation sites) with PLCG1 (via the SH2 domains). Interacts (phosphorylated form) with PLCG1; the interaction is enhanced by hepatocyte growth factor (HGF). In terms of processing, phosphorylated on tyrosine residues by SRC. The unphosphorylated form increases the initial rate of actin-nucleating activity, whereas the tyrosine-phosphorylated form inhibits actin-nucleating activity, enhances actin-bundling activity and enhances actin-severing activity by reducing high Ca(2+) requirements. The tyrosine-phosphorylated form does not regulate actin-capping activity. Tyrosine phosphorylation is essential for cell migration: tyrosine phosphorylation sites in the N-terminus half regulate actin reorganization and cell morphology, whereas tyrosine phosphorylation sites in the C-terminus half regulate cell migration via interaction with PLCG1. Tyrosine phosphorylation is induced by epidermal growth factor (EGF) and stimulates cell migration.

Its subcellular location is the cytoplasm. The protein localises to the cytoskeleton. It localises to the cell projection. The protein resides in the lamellipodium. It is found in the ruffle. Its subcellular location is the microvillus. The protein localises to the filopodium tip. It localises to the filopodium. Its function is as follows. Epithelial cell-specific Ca(2+)-regulated actin-modifying protein that modulates the reorganization of microvillar actin filaments. Plays a role in the actin nucleation, actin filament bundle assembly, actin filament capping and severing. Binds phosphatidylinositol 4,5-bisphosphate (PIP2) and lysophosphatidic acid (LPA); binds LPA with higher affinity than PIP2. Binding to LPA increases its phosphorylation by SRC and inhibits all actin-modifying activities. Binding to PIP2 inhibits actin-capping and -severing activities but enhances actin-bundling activity. Regulates the intestinal epithelial cell morphology, cell invasion, cell migration and apoptosis. Protects against apoptosis induced by dextran sodium sulfate (DSS) in the gastrointestinal epithelium. Appears to regulate cell death by maintaining mitochondrial integrity. Enhances hepatocyte growth factor (HGF)-induced epithelial cell motility, chemotaxis and wound repair. This is Villin-1 (VIL1) from Bos taurus (Bovine).